A 598-amino-acid polypeptide reads, in one-letter code: Elongation factor 4 (598 aa).

The tr-type G domain maps to 2 to 184 (KNIRNFSIIA…EIVRKIPAPE (183 aa)). Residues 14-19 (DHGKST) and 131-134 (NKID) each bind GTP.

This sequence belongs to the TRAFAC class translation factor GTPase superfamily. Classic translation factor GTPase family. LepA subfamily.

The protein resides in the cell inner membrane. It carries out the reaction GTP + H2O = GDP + phosphate + H(+). In terms of biological role, required for accurate and efficient protein synthesis under certain stress conditions. May act as a fidelity factor of the translation reaction, by catalyzing a one-codon backward translocation of tRNAs on improperly translocated ribosomes. Back-translocation proceeds from a post-translocation (POST) complex to a pre-translocation (PRE) complex, thus giving elongation factor G a second chance to translocate the tRNAs correctly. Binds to ribosomes in a GTP-dependent manner. The protein is Elongation factor 4 of Histophilus somni (strain 2336) (Haemophilus somnus).